The primary structure comprises 426 residues: Eukaryotic translation initiation factor 3 subunit M (426 aa).

Positions 179–350 constitute a PCI domain; it reads DDEDSYRYLI…KVFLVHRTTY (172 aa). Residues 385 to 401 show a composition bias toward basic and acidic residues; it reads DVEGQREREQQELERKL. A disordered region spans residues 385-426; sequence DVEGQREREQQELERKLAGAGMGGGPGGDRRRQQKPRTDEDD.

It belongs to the eIF-3 subunit M family. Component of the eukaryotic translation initiation factor 3 (eIF-3) complex.

It is found in the cytoplasm. Component of the eukaryotic translation initiation factor 3 (eIF-3) complex, which is involved in protein synthesis of a specialized repertoire of mRNAs and, together with other initiation factors, stimulates binding of mRNA and methionyl-tRNAi to the 40S ribosome. The eIF-3 complex specifically targets and initiates translation of a subset of mRNAs involved in cell proliferation. This chain is Eukaryotic translation initiation factor 3 subunit M, found in Chaetomium globosum (strain ATCC 6205 / CBS 148.51 / DSM 1962 / NBRC 6347 / NRRL 1970) (Soil fungus).